We begin with the raw amino-acid sequence, 106 residues long: Transcription factor TRY (106 aa).

The 38-residue stretch at 34-71 (TEQEEDLIFRMYRLVGDRWDLIAGRVPGRQPEEIERYW) folds into the Myb-like domain. Residues 83–106 (RRQLHSSSHKHTKPHRPRFSIYPS) are disordered. The span at 84 to 100 (RQLHSSSHKHTKPHRPR) shows a compositional bias: basic residues.

As to quaternary structure, interacts with GL3 and thus prevents GL1 GL3 interaction. Also interacts with BHLH2. Expressed in roots, leaves, siliques and inflorescences.

It is found in the nucleus. In terms of biological role, transcription factor. Involved in epidermal cell fate specification. Negative regulator of trichome development, including endoreplication, by lateral inhibition involving intercellular interactions. Promotes the formation of hair developing cells (trichoblasts) in H position in root epidermis, probably by inhibiting non-hair cell (atrichoblasts) formation. This Arabidopsis thaliana (Mouse-ear cress) protein is Transcription factor TRY (TRY).